Here is a 160-residue protein sequence, read N- to C-terminus: MPRKGRVPRREILPDAKYNSIIVHKLINKVMKDGKKSTAEYIVYTALERVAEKLNLSPVEVLEKALENVKPVWEVRPRRVGGATYQVPVEVEEHRRESLGIKWLVDAARERARHRGSYTMEERLAAEIMDAIENKGAAVKKKEDTHRMAEANKVFAHFKW.

The protein belongs to the universal ribosomal protein uS7 family. Part of the 30S ribosomal subunit. Contacts proteins S9 and S11.

Its function is as follows. One of the primary rRNA binding proteins, it binds directly to 16S rRNA where it nucleates assembly of the head domain of the 30S subunit. Is located at the subunit interface close to the decoding center, probably blocks exit of the E-site tRNA. This is Small ribosomal subunit protein uS7 from Hydrogenobaculum sp. (strain Y04AAS1).